Here is a 375-residue protein sequence, read N- to C-terminus: Cobalt-precorrin-5B C(1)-methyltransferase (375 aa).

It belongs to the CbiD family.

The enzyme catalyses Co-precorrin-5B + S-adenosyl-L-methionine = Co-precorrin-6A + S-adenosyl-L-homocysteine. It participates in cofactor biosynthesis; adenosylcobalamin biosynthesis; cob(II)yrinate a,c-diamide from sirohydrochlorin (anaerobic route): step 6/10. In terms of biological role, catalyzes the methylation of C-1 in cobalt-precorrin-5B to form cobalt-precorrin-6A. The polypeptide is Cobalt-precorrin-5B C(1)-methyltransferase (Fusobacterium nucleatum subsp. nucleatum (strain ATCC 25586 / DSM 15643 / BCRC 10681 / CIP 101130 / JCM 8532 / KCTC 2640 / LMG 13131 / VPI 4355)).